Reading from the N-terminus, the 115-residue chain is NAD(P)H-quinone oxidoreductase subunit M (115 aa).

This sequence belongs to the complex I NdhM subunit family. NDH-1 can be composed of about 15 different subunits; different subcomplexes with different compositions have been identified which probably have different functions.

It localises to the cellular thylakoid membrane. The catalysed reaction is a plastoquinone + NADH + (n+1) H(+)(in) = a plastoquinol + NAD(+) + n H(+)(out). The enzyme catalyses a plastoquinone + NADPH + (n+1) H(+)(in) = a plastoquinol + NADP(+) + n H(+)(out). In terms of biological role, NDH-1 shuttles electrons from an unknown electron donor, via FMN and iron-sulfur (Fe-S) centers, to quinones in the respiratory and/or the photosynthetic chain. The immediate electron acceptor for the enzyme in this species is believed to be plastoquinone. Couples the redox reaction to proton translocation, and thus conserves the redox energy in a proton gradient. Cyanobacterial NDH-1 also plays a role in inorganic carbon-concentration. The protein is NAD(P)H-quinone oxidoreductase subunit M of Synechococcus sp. (strain WH7803).